The chain runs to 1093 residues: Leucine-rich repeats and immunoglobulin-like domains protein 1 (1093 aa).

Positions 1–34 (MARPVRGGLGAPRRSPCLLLLWLLLLRLEPVTAA) are cleaved as a signal peptide. In terms of domain architecture, LRRNT spans 35 to 68 (AGPRAPCAAACTCAGDSLDCGGRGLAALPGDLPS). The Extracellular segment spans residues 35 to 794 (AGPRAPCAAA…GCRKDGTTVG (760 aa)). Cysteines 45 and 54 form a disulfide. 15 LRR repeats span residues 69-90 (WTRS…GFED), 93-114 (NLQE…GAAS), 116-137 (HVVS…QLKA), 140-161 (SLEV…CFPH), 164-185 (PIKE…AFDG), 189-210 (SLLT…AFKL), 212-233 (RLTQ…TFQG), 236-257 (SLEV…AFWG), 260-281 (KMHV…SLYG), 284-305 (ALHQ…GWSF), 308-329 (KLHE…SLAE), 332-353 (SLSV…AFKG), 356-378 (SLRV…SGAF), 383-404 (SLSK…AFSG), and 407-428 (GLEH…AFVK). Asn74 carries an N-linked (GlcNAc...) asparagine glycan. N-linked (GlcNAc...) asparagine glycosylation is present at Asn150. The N-linked (GlcNAc...) asparagine glycan is linked to Asn246. N-linked (GlcNAc...) asparagine glycans are attached at residues Asn292 and Asn318. The LRRCT domain occupies 440–491 (DSFLCDCQLKWLPPWLIGRMLQAFVTATCAHPESLKGQSIFSVPPESFVCDD). 4 disulfide bridges follow: Cys444–Cys468, Cys446–Cys489, Cys516–Cys577, and Cys620–Cys672. Ig-like C2-type domains lie at 495–594 (PQII…ARLT), 599–688 (PSFT…ATLT), and 693–779 (PSLV…SQLS). Asn684 is a glycosylation site (N-linked (GlcNAc...) asparagine). A disulfide bridge connects residues Cys714 and Cys763. Residues 795-815 (IFTIAVVSSIVLTSLVWVCII) traverse the membrane as a helical segment. The Cytoplasmic segment spans residues 816–1093 (YQTRKKSEEY…RVPLLLAPKS (278 aa)). Disordered stretches follow at residues 946 to 983 (AFHP…CSRT) and 1063 to 1093 (PKAC…APKS).

Interacts (via extracellular LRR and Ig-like domains) with EGFR/ERBB1, ERBB2, ERBB3 and ERBB4 (via extracellular domain). The physiological relevance of the interaction is controversial; LRIG1 may have low affinity for EGFR, and interaction may occur only when high levels of both proteins are present. Widely expressed.

It is found in the cell membrane. In terms of biological role, acts as a feedback negative regulator of signaling by receptor tyrosine kinases, through a mechanism that involves enhancement of receptor ubiquitination and accelerated intracellular degradation. This chain is Leucine-rich repeats and immunoglobulin-like domains protein 1, found in Homo sapiens (Human).